Here is a 209-residue protein sequence, read N- to C-terminus: Ribosomal RNA large subunit methyltransferase E (209 aa).

Glycine 63, tryptophan 65, aspartate 83, aspartate 99, and aspartate 124 together coordinate S-adenosyl-L-methionine. Lysine 164 serves as the catalytic Proton acceptor.

Belongs to the class I-like SAM-binding methyltransferase superfamily. RNA methyltransferase RlmE family.

Its subcellular location is the cytoplasm. It catalyses the reaction uridine(2552) in 23S rRNA + S-adenosyl-L-methionine = 2'-O-methyluridine(2552) in 23S rRNA + S-adenosyl-L-homocysteine + H(+). Specifically methylates the uridine in position 2552 of 23S rRNA at the 2'-O position of the ribose in the fully assembled 50S ribosomal subunit. The polypeptide is Ribosomal RNA large subunit methyltransferase E (Shewanella piezotolerans (strain WP3 / JCM 13877)).